We begin with the raw amino-acid sequence, 256 residues long: Ribonuclease HII (256 aa).

Positions 73–256 constitute an RNase H type-2 domain; the sequence is KLIAGIDEAG…RVSFTKNFIV (184 aa). A divalent metal cation-binding residues include Asp79, Glu80, and Asp171.

It belongs to the RNase HII family. Mn(2+) is required as a cofactor. The cofactor is Mg(2+).

The protein resides in the cytoplasm. It carries out the reaction Endonucleolytic cleavage to 5'-phosphomonoester.. Its function is as follows. Endonuclease that specifically degrades the RNA of RNA-DNA hybrids. This is Ribonuclease HII from Acetivibrio thermocellus (strain ATCC 27405 / DSM 1237 / JCM 9322 / NBRC 103400 / NCIMB 10682 / NRRL B-4536 / VPI 7372) (Clostridium thermocellum).